Consider the following 236-residue polypeptide: Potassium/proton antiporter CemA (236 aa).

Transmembrane regions (helical) follow at residues 12–32 (TVTSIKYFISFILFVLITNHV), 114–134 (IANVFADLLSLCIFVLALLLG), 161–181 (IILFTDIFVGFHSSHGWEILI), and 196–216 (FIFLFVATFPVVLDTVFKYWI).

Belongs to the CemA family.

Its subcellular location is the plastid. It localises to the chloroplast inner membrane. It catalyses the reaction K(+)(in) + H(+)(out) = K(+)(out) + H(+)(in). Its function is as follows. Contributes to K(+)/H(+) antiport activity by supporting proton efflux to control proton extrusion and homeostasis in chloroplasts in a light-dependent manner to modulate photosynthesis. Prevents excessive induction of non-photochemical quenching (NPQ) under continuous-light conditions. Indirectly promotes efficient inorganic carbon uptake into chloroplasts. The polypeptide is Potassium/proton antiporter CemA (Chlorokybus atmophyticus (Soil alga)).